Consider the following 164-residue polypeptide: uncharacterized protein (164 aa).

Residues 1-29 show a composition bias toward polar residues; the sequence is MLCVRSSSSNLESDTYLSRYSTRASAGTG. Residues 1-62 form a disordered region; it reads MLCVRSSSSN…SKPSNNKNID (62 aa). Residues 43-62 show a composition bias toward low complexity; the sequence is SSDSSSSSSESKPSNNKNID.

This is an uncharacterized protein from Schizosaccharomyces pombe (strain 972 / ATCC 24843) (Fission yeast).